We begin with the raw amino-acid sequence, 261 residues long: MASPDWGYDDKNGPEQWSKLYPIANGNNQSPVDIKTSEAKHDTSLKPISVSYNPATAKEIINVGHSFHVNFEDNDNRSVLKGGPFSDSYRLFQFHFHWGSSNEYGSEHTVDGVKYSSELHIVHWNSAKYSSLAEAVSKADGLAVIGVLMKVGEANPKLQKVLDALHAIKTKGKRAPFTNFDPSTLLPSSLDFWTYSGSLTHPPLYESVTWIICKESISVSSEQLAQFRSLLSNVEGDNPVPSQRNNRPTQPLKGRTVRASF.

A2 is subject to N-acetylalanine. An Alpha-carbonic anhydrase domain is found at 4 to 261; it reads PDWGYDDKNG…LKGRTVRASF (258 aa). Residue H65 is the Proton donor/acceptor of the active site. Zn(2+) contacts are provided by H95, H97, and H120. Residues T200 and 200-201 each bind substrate; that span reads TH. Residues 235 to 261 form a disordered region; that stretch reads EGDNPVPSQRNNRPTQPLKGRTVRASF. Polar residues predominate over residues 240–249; the sequence is VPSQRNNRPT.

It belongs to the alpha-carbonic anhydrase family. The cofactor is Zn(2+).

The protein localises to the cytoplasm. The catalysed reaction is hydrogencarbonate + H(+) = CO2 + H2O. The enzyme catalyses urea = cyanamide + H2O. Its activity is regulated as follows. Inhibited by acetazolamide. In terms of biological role, catalyzes the reversible hydration of carbon dioxide. Can hydrate cyanamide to urea. This is Carbonic anhydrase 1 (CA1) from Macaca nemestrina (Pig-tailed macaque).